The following is a 118-amino-acid chain: Large ribosomal subunit protein uL18 (118 aa).

It belongs to the universal ribosomal protein uL18 family. As to quaternary structure, part of the 50S ribosomal subunit; part of the 5S rRNA/L5/L18/L25 subcomplex. Contacts the 5S and 23S rRNAs.

Functionally, this is one of the proteins that bind and probably mediate the attachment of the 5S RNA into the large ribosomal subunit, where it forms part of the central protuberance. This chain is Large ribosomal subunit protein uL18, found in Rickettsia canadensis (strain McKiel).